We begin with the raw amino-acid sequence, 406 residues long: UPF0754 membrane protein CYB_2931 (406 aa).

2 helical membrane passes run 1–21 and 385–405; these read MAFWIYVVPPLAGLVIGYFTN and IVNLGGLLGFLVGCVQVLFLL.

This sequence belongs to the UPF0754 family.

It is found in the cell inner membrane. This chain is UPF0754 membrane protein CYB_2931, found in Synechococcus sp. (strain JA-2-3B'a(2-13)) (Cyanobacteria bacterium Yellowstone B-Prime).